A 481-amino-acid chain; its full sequence is O-acetyltransferase andG (481 aa).

It belongs to the fumigaclavine B O-acetyltransferase family. In terms of assembly, monomer.

The protein operates within secondary metabolite biosynthesis; terpenoid biosynthesis. In terms of biological role, O-acetyltransferase; part of the gene cluster that mediates the biosynthesis of anditomin, a fungal meroterpenoid. The first step of the pathway is the synthesis of 3,5-dimethylorsellinic acid (DMOA) by the polyketide synthase andM. DMOA is then converted to the phthalide compound 5,7-dihydroxy-4,6-dimethylphthalide (DHDMP) by the cytochrome P450 monooxygenase andK, which is further prenylated by the prenyltransferase andD to yield farnesyl-DHDMP. Further epoxidation by the FAD-dependent monooxygenase andE leads to epoxyfarnesyl-DHDMP. The next step involves the terpene cyclase andB that converts epoxyfarnesyl-DHDMP into preandiloid A through opening of the epoxide ring followed by the cyclization of the farnesyl moiety. Preandiloid A is in turn oxidized at the C-3 hydroxyl group to yield preandiloid B by the dehydrogenase andC. The dioxygenase andA is solely responsible for the dehydrogenation of preandiloid B leading to the enone preandiloid C, as well as for the intriguing structural rearrangement to generate the bicyclo[2.2.2]octane core, transforming preandiloid C into andiconin. FAD-binding monooxygenase andJ then produces andilesin D which is reduced by dehydrogenase andI to yield andilesin A. Action of acetyltransferase andG followed by a spontaneous acetate elimination leads then to andilesin B, which is in turn substrate of the short chain dehydrogenase andH to yield andilesin C. Finally, the dioxygenase andF catalyzes the transformation of andilesin C to anditomin. The chain is O-acetyltransferase andG from Emericella variicolor (Aspergillus stellatus).